We begin with the raw amino-acid sequence, 134 residues long: MGRDTIAEIITSIRNADMDRKRVVRIASTHITENIVKLLLREGFFENVRKHRENNKNFFVLTLRHRRNKKRPLRNILKLKRISRPGLRIYYKSQKIPRILGGMGVIIISTSRGIMTDREARLEGIGGEILFYIW.

The protein belongs to the universal ribosomal protein uS8 family. In terms of assembly, part of the 30S ribosomal subunit.

Its subcellular location is the plastid. Its function is as follows. One of the primary rRNA binding proteins, it binds directly to 16S rRNA central domain where it helps coordinate assembly of the platform of the 30S subunit. The sequence is that of Small ribosomal subunit protein uS8c (rps8) from Cuscuta reflexa (Southern Asian dodder).